Consider the following 370-residue polypeptide: Glutamate 5-kinase (370 aa).

Lys-13 provides a ligand contact to ATP. Substrate is bound by residues Ser-54, Asp-140, and Asn-152. ATP is bound by residues 172 to 173 and 214 to 220; these read SD and SGGMVTK. Residues 278 to 355 form the PUA domain; it reads TGTLVLDAGA…GEIEAILGFR (78 aa).

The protein belongs to the glutamate 5-kinase family.

It localises to the cytoplasm. The enzyme catalyses L-glutamate + ATP = L-glutamyl 5-phosphate + ADP. The protein operates within amino-acid biosynthesis; L-proline biosynthesis; L-glutamate 5-semialdehyde from L-glutamate: step 1/2. In terms of biological role, catalyzes the transfer of a phosphate group to glutamate to form L-glutamate 5-phosphate. This is Glutamate 5-kinase from Paramagnetospirillum magneticum (strain ATCC 700264 / AMB-1) (Magnetospirillum magneticum).